Here is a 347-residue protein sequence, read N- to C-terminus: uncharacterized protein (347 aa).

The signal sequence occupies residues 1-21; sequence MRYRIFLLFFFALLPTSLVWA.

This is an uncharacterized protein from Escherichia coli (strain K12).